The following is a 74-amino-acid chain: Homeobox protein Hox-B8 (74 aa).

Positions 1-24 (YTDCKLAASGLGEEAESSEQSPSP) are enriched in low complexity. Positions 1-28 (YTDCKLAASGLGEEAESSEQSPSPTQLF) are disordered. An Antp-type hexapeptide motif is present at residues 27-32 (LFPWMR). A DNA-binding region (homeobox) is located at residues 39 to 74 (RRRGRQTYSRYQTLELEKEFLFNPYLTRKRRIEVSR).

This sequence belongs to the Antp homeobox family.

The protein localises to the nucleus. In terms of biological role, sequence-specific transcription factor which is part of a developmental regulatory system that provides cells with specific positional identities on the anterior-posterior axis. This is Homeobox protein Hox-B8 (HOXB8) from Gallus gallus (Chicken).